The chain runs to 238 residues: Large ribosomal subunit protein uL1 (238 aa).

It belongs to the universal ribosomal protein uL1 family. In terms of assembly, part of the 50S ribosomal subunit.

Binds directly to 23S rRNA. The L1 stalk is quite mobile in the ribosome, and is involved in E site tRNA release. Its function is as follows. Protein L1 is also a translational repressor protein, it controls the translation of the L11 operon by binding to its mRNA. The sequence is that of Large ribosomal subunit protein uL1 from Frankia alni (strain DSM 45986 / CECT 9034 / ACN14a).